The chain runs to 299 residues: Pyridoxal 5'-phosphate synthase subunit PdxS (299 aa).

Asp-24 contacts D-ribose 5-phosphate. Lys-81 functions as the Schiff-base intermediate with D-ribose 5-phosphate in the catalytic mechanism. D-ribose 5-phosphate is bound at residue Gly-153. Residue Arg-165 coordinates D-glyceraldehyde 3-phosphate. D-ribose 5-phosphate is bound by residues Gly-219 and 240 to 241 (GS).

Belongs to the PdxS/SNZ family. In terms of assembly, in the presence of PdxT, forms a dodecamer of heterodimers.

It catalyses the reaction aldehydo-D-ribose 5-phosphate + D-glyceraldehyde 3-phosphate + L-glutamine = pyridoxal 5'-phosphate + L-glutamate + phosphate + 3 H2O + H(+). The protein operates within cofactor biosynthesis; pyridoxal 5'-phosphate biosynthesis. In terms of biological role, catalyzes the formation of pyridoxal 5'-phosphate from ribose 5-phosphate (RBP), glyceraldehyde 3-phosphate (G3P) and ammonia. The ammonia is provided by the PdxT subunit. Can also use ribulose 5-phosphate and dihydroxyacetone phosphate as substrates, resulting from enzyme-catalyzed isomerization of RBP and G3P, respectively. This chain is Pyridoxal 5'-phosphate synthase subunit PdxS, found in Methanococcus aeolicus (strain ATCC BAA-1280 / DSM 17508 / OCM 812 / Nankai-3).